A 548-amino-acid polypeptide reads, in one-letter code: Glucose-6-phosphate isomerase (548 aa).

Residue E355 is the Proton donor of the active site. Residues H386 and K514 contribute to the active site.

This sequence belongs to the GPI family.

It is found in the cytoplasm. It carries out the reaction alpha-D-glucose 6-phosphate = beta-D-fructose 6-phosphate. The protein operates within carbohydrate biosynthesis; gluconeogenesis. Its pathway is carbohydrate degradation; glycolysis; D-glyceraldehyde 3-phosphate and glycerone phosphate from D-glucose: step 2/4. Catalyzes the reversible isomerization of glucose-6-phosphate to fructose-6-phosphate. The chain is Glucose-6-phosphate isomerase from Proteus mirabilis (strain HI4320).